A 410-amino-acid polypeptide reads, in one-letter code: Argininosuccinate synthase (410 aa).

ATP contacts are provided by residues 13-21 (AYSGGLDTS) and Ala40. L-citrulline-binding residues include Tyr91 and Ser96. Gly121 contacts ATP. Thr123, Asn127, and Asp128 together coordinate L-aspartate. Asn127 contacts L-citrulline. L-citrulline contacts are provided by Arg131, Ser182, Ser191, Glu267, and Tyr279.

The protein belongs to the argininosuccinate synthase family. Type 1 subfamily. In terms of assembly, homotetramer.

It localises to the cytoplasm. The enzyme catalyses L-citrulline + L-aspartate + ATP = 2-(N(omega)-L-arginino)succinate + AMP + diphosphate + H(+). The protein operates within amino-acid biosynthesis; L-arginine biosynthesis; L-arginine from L-ornithine and carbamoyl phosphate: step 2/3. In Gluconobacter oxydans (strain 621H) (Gluconobacter suboxydans), this protein is Argininosuccinate synthase.